The sequence spans 507 residues: Glycerol kinase 1 (507 aa).

T12 lines the ADP pocket. Positions 12, 13, and 14 each coordinate ATP. T12 contacts sn-glycerol 3-phosphate. R16 provides a ligand contact to ADP. Positions 82, 83, 134, and 249 each coordinate sn-glycerol 3-phosphate. Residues R82, E83, Y134, D249, and Q250 each coordinate glycerol. Residues T271 and G315 each contribute to the ADP site. Positions 271, 315, 319, and 416 each coordinate ATP. Residues G416 and N420 each coordinate ADP.

This sequence belongs to the FGGY kinase family.

The catalysed reaction is glycerol + ATP = sn-glycerol 3-phosphate + ADP + H(+). It participates in polyol metabolism; glycerol degradation via glycerol kinase pathway; sn-glycerol 3-phosphate from glycerol: step 1/1. Inhibited by fructose 1,6-bisphosphate (FBP). Functionally, key enzyme in the regulation of glycerol uptake and metabolism. Catalyzes the phosphorylation of glycerol to yield sn-glycerol 3-phosphate. This Streptomyces coelicolor (strain ATCC BAA-471 / A3(2) / M145) protein is Glycerol kinase 1.